A 182-amino-acid polypeptide reads, in one-letter code: ATP-dependent protease subunit HslV (182 aa).

Threonine 6 is a catalytic residue. Na(+)-binding residues include alanine 164, cysteine 167, and threonine 170.

It belongs to the peptidase T1B family. HslV subfamily. As to quaternary structure, a double ring-shaped homohexamer of HslV is capped on each side by a ring-shaped HslU homohexamer. The assembly of the HslU/HslV complex is dependent on binding of ATP.

The protein localises to the cytoplasm. The enzyme catalyses ATP-dependent cleavage of peptide bonds with broad specificity.. Allosterically activated by HslU binding. In terms of biological role, protease subunit of a proteasome-like degradation complex believed to be a general protein degrading machinery. The protein is ATP-dependent protease subunit HslV of Borreliella afzelii (strain PKo) (Borrelia afzelii).